The following is a 546-amino-acid chain: Probable protein kinase UbiB (546 aa).

Positions 124-502 (DFEIKPLASA…HVRQGQSRYF (379 aa)) constitute a Protein kinase domain. Residues 130 to 138 (LASASIAQV) and K153 contribute to the ATP site. D288 serves as the catalytic Proton acceptor. 2 consecutive transmembrane segments (helical) span residues 501–521 (YFLG…VSRP) and 522–542 (EWGL…FVGW).

The protein belongs to the ABC1 family. UbiB subfamily.

It localises to the cell inner membrane. It participates in cofactor biosynthesis; ubiquinone biosynthesis [regulation]. Functionally, is probably a protein kinase regulator of UbiI activity which is involved in aerobic coenzyme Q (ubiquinone) biosynthesis. In Escherichia coli (strain SMS-3-5 / SECEC), this protein is Probable protein kinase UbiB.